Consider the following 178-residue polypeptide: Sec-independent protein translocase protein TatB (178 aa).

A helical membrane pass occupies residues Met1–Gly21. Positions Leu146 to Ser178 are disordered. Positions Glu168–Ser178 are enriched in basic and acidic residues.

Belongs to the TatB family. As to quaternary structure, the Tat system comprises two distinct complexes: a TatABC complex, containing multiple copies of TatA, TatB and TatC subunits, and a separate TatA complex, containing only TatA subunits. Substrates initially bind to the TatABC complex, which probably triggers association of the separate TatA complex to form the active translocon.

Its subcellular location is the cell inner membrane. Part of the twin-arginine translocation (Tat) system that transports large folded proteins containing a characteristic twin-arginine motif in their signal peptide across membranes. Together with TatC, TatB is part of a receptor directly interacting with Tat signal peptides. TatB may form an oligomeric binding site that transiently accommodates folded Tat precursor proteins before their translocation. The sequence is that of Sec-independent protein translocase protein TatB from Bradyrhizobium sp. (strain ORS 278).